The primary structure comprises 116 residues: Large ribosomal subunit protein bL20 (116 aa).

The protein belongs to the bacterial ribosomal protein bL20 family.

In terms of biological role, binds directly to 23S ribosomal RNA and is necessary for the in vitro assembly process of the 50S ribosomal subunit. It is not involved in the protein synthesizing functions of that subunit. The sequence is that of Large ribosomal subunit protein bL20 (rplT) from Helicobacter pylori (strain ATCC 700392 / 26695) (Campylobacter pylori).